The following is a 540-amino-acid chain: Mitochondrial distribution and morphology protein 34 (540 aa).

The SMP-LTD domain maps to 1–208 (MSFKFNSGTF…LPSVIFNMSQ (208 aa)). Disordered stretches follow at residues 26–51 (ALNP…KKPK) and 379–399 (RSKS…SGSL). Polar residues predominate over residues 35–44 (PESTSGQDGS).

The protein belongs to the MDM34 family. In terms of assembly, component of the ER-mitochondria encounter structure (ERMES) or MDM complex, composed of MMM1, MDM10, MDM12 and MDM34.

It is found in the mitochondrion outer membrane. In terms of biological role, component of the ERMES/MDM complex, which serves as a molecular tether to connect the endoplasmic reticulum (ER) and mitochondria. Components of this complex are involved in the control of mitochondrial shape and protein biogenesis, and function in nonvesicular lipid trafficking between the ER and mitochondria. MDM34 is required for the interaction of the ER-resident membrane protein MMM1 and the outer mitochondrial membrane-resident beta-barrel protein MDM10. This is Mitochondrial distribution and morphology protein 34 from Kluyveromyces lactis (strain ATCC 8585 / CBS 2359 / DSM 70799 / NBRC 1267 / NRRL Y-1140 / WM37) (Yeast).